We begin with the raw amino-acid sequence, 221 residues long: Iron-sulfur cluster assembly SufBD family protein ycf24 (221 aa).

Belongs to the iron-sulfur cluster assembly SufBD family.

It is found in the plastid. The protein resides in the chloroplast. This is Iron-sulfur cluster assembly SufBD family protein ycf24 (ycf24) from Galdieria sulphuraria (Red alga).